A 95-amino-acid chain; its full sequence is Co-chaperonin GroES (95 aa).

The protein belongs to the GroES chaperonin family. Heptamer of 7 subunits arranged in a ring. Interacts with the chaperonin GroEL.

Its subcellular location is the cytoplasm. Together with the chaperonin GroEL, plays an essential role in assisting protein folding. The GroEL-GroES system forms a nano-cage that allows encapsulation of the non-native substrate proteins and provides a physical environment optimized to promote and accelerate protein folding. GroES binds to the apical surface of the GroEL ring, thereby capping the opening of the GroEL channel. The polypeptide is Co-chaperonin GroES (Rhodobacter capsulatus (Rhodopseudomonas capsulata)).